We begin with the raw amino-acid sequence, 210 residues long: MSSQNANLMREVRLFENHSEREQMENLSELFAVLNALEHLEKMFSRDHVSADEYKSECFKLIDQYKVTMRLVHGATSIEDFAKKYRLHCPAAIERIREGRPITVKDDQGNVLKHIASIVEQFITFLDALRLNTRAVDDLYPGLDDLYNAINTTSRVPIDAIVTTKVKKWHDRLSSMAASDEISDEDARQMIFDVESAYQAFNKALNELKH.

The VPS28 N-terminal domain occupies 1 to 106 (MSSQNANLMR…REGRPITVKD (106 aa)). One can recognise a VPS28 C-terminal domain in the interval 110 to 206 (NVLKHIASIV…AYQAFNKALN (97 aa)).

Belongs to the VPS28 family. In terms of assembly, component of the ESCRT-I complex (endosomal sorting complex required for transport I). In terms of tissue distribution, expressed in embryos.

It is found in the endosome. Component of the ESCRT-I complex, a regulator of vesicular trafficking process. The chain is Vacuolar protein sorting-associated protein 28 homolog (vps-28) from Caenorhabditis elegans.